Consider the following 538-residue polypeptide: MAKLLRYSEEARRSLEAGVDAVANAVKITLGPKGRNVVIEKSWGSPTITNDGVSIAKEIELEDKFANLGAQLVKEVASKTNDVAGDGTTTATVLAQAMIKEGLKMVAAGANPILIKKGIDKATSKVVEEIKKISKKLSSTEDIAHVASISANSEEIGKLIAEAMEKVGEDGVITVEDSKTIDTYVEFTEGMQFDRGYISPYFVTDPEKMEVVYNEPFILITDRKLSNVKPLIPILEKVAQTGRPLVIIAEDVEGEVLTTLVLNKLKGTLNTVAVKAPGFGDRRKAMLQDIAILTGGIVASEEVGINLEDLTLQDLGRADVVRVKKDETIIVGGKGKPEEIKKRVAQIKAQIEQTTSEYEKETLQERMAKLAGGVAVIKVGAATETELKEKKHRIEDALSATRAAVEEGIVPGGGITLLRARKVLEPVLNELTGDEKLGAQIVYNALEAPIRQIALNAGYDGAIIIHNVLSKDDVAYGFDALKGEYCNMYERGIIDPAKVTRSALQNAASIAGMLLTTEVLVVEKPEEKKPAAPEMPEY.

Residues 29 to 32, 86 to 90, Gly413, 479 to 481, and Asp495 contribute to the ATP site; these read TLGP, DGTTT, and DAL.

The protein belongs to the chaperonin (HSP60) family. Forms a cylinder of 14 subunits composed of two heptameric rings stacked back-to-back. Interacts with the co-chaperonin GroES.

It is found in the cytoplasm. It catalyses the reaction ATP + H2O + a folded polypeptide = ADP + phosphate + an unfolded polypeptide.. Together with its co-chaperonin GroES, plays an essential role in assisting protein folding. The GroEL-GroES system forms a nano-cage that allows encapsulation of the non-native substrate proteins and provides a physical environment optimized to promote and accelerate protein folding. This Fervidobacterium nodosum (strain ATCC 35602 / DSM 5306 / Rt17-B1) protein is Chaperonin GroEL.